The primary structure comprises 261 residues: Protein phosphatase inhibitor 2 (261 aa).

Over residues Met1–Asp16 the composition is skewed to basic and acidic residues. The interval Met1–Glu150 is required for binding to pppB. Residues Met1 to Gln261 form a disordered region. The segment covering Asp17–Glu60 has biased composition (acidic residues). Positions Leu123–Met134 are enriched in polar residues. Residues Glu150–His242 are a coiled coil. Basic and acidic residues predominate over residues Glu154 to Phe163. Basic residues predominate over residues Asp195 to His206. Over residues Asp212 to Thr225 the composition is skewed to acidic residues. Residues Glu226–Arg250 show a composition bias toward basic and acidic residues.

This sequence belongs to the protein phosphatase inhibitor 2 family. As to quaternary structure, interacts with pppB.

Functionally, inhibitor of protein-phosphatase 1 (PP1). The chain is Protein phosphatase inhibitor 2 (dpiA) from Dictyostelium discoideum (Social amoeba).